Consider the following 522-residue polypeptide: 2-isopropylmalate synthase (522 aa).

The region spanning 5–267 is the Pyruvate carboxyltransferase domain; the sequence is VIIFDTTLRD…DCGINAKEIH (263 aa). Mn(2+) contacts are provided by aspartate 14, histidine 202, histidine 204, and asparagine 238. Residues 392 to 522 are regulatory domain; that stretch reads QLQHMMVHSD…IHKERELGGV (131 aa).

It belongs to the alpha-IPM synthase/homocitrate synthase family. LeuA type 1 subfamily. Homodimer. Mn(2+) serves as cofactor.

Its subcellular location is the cytoplasm. It catalyses the reaction 3-methyl-2-oxobutanoate + acetyl-CoA + H2O = (2S)-2-isopropylmalate + CoA + H(+). The protein operates within amino-acid biosynthesis; L-leucine biosynthesis; L-leucine from 3-methyl-2-oxobutanoate: step 1/4. Its function is as follows. Catalyzes the condensation of the acetyl group of acetyl-CoA with 3-methyl-2-oxobutanoate (2-ketoisovalerate) to form 3-carboxy-3-hydroxy-4-methylpentanoate (2-isopropylmalate). This Shewanella frigidimarina (strain NCIMB 400) protein is 2-isopropylmalate synthase.